A 394-amino-acid polypeptide reads, in one-letter code: NAD(P)H-quinone oxidoreductase subunit H (394 aa).

This sequence belongs to the complex I 49 kDa subunit family. NDH-1 can be composed of about 15 different subunits; different subcomplexes with different compositions have been identified which probably have different functions.

The protein localises to the cellular thylakoid membrane. The enzyme catalyses a plastoquinone + NADH + (n+1) H(+)(in) = a plastoquinol + NAD(+) + n H(+)(out). It catalyses the reaction a plastoquinone + NADPH + (n+1) H(+)(in) = a plastoquinol + NADP(+) + n H(+)(out). Its function is as follows. NDH-1 shuttles electrons from an unknown electron donor, via FMN and iron-sulfur (Fe-S) centers, to quinones in the respiratory and/or the photosynthetic chain. The immediate electron acceptor for the enzyme in this species is believed to be plastoquinone. Couples the redox reaction to proton translocation, and thus conserves the redox energy in a proton gradient. Cyanobacterial NDH-1 also plays a role in inorganic carbon-concentration. This Trichormus variabilis (strain ATCC 29413 / PCC 7937) (Anabaena variabilis) protein is NAD(P)H-quinone oxidoreductase subunit H.